The primary structure comprises 662 residues: Rap guanine nucleotide exchange factor-like 1 (662 aa).

Residues methionine 1–glutamate 149 form a disordered region. The segment covering valine 20–glycine 48 has biased composition (gly residues). Positions glycine 49–leucine 64 are enriched in low complexity. The span at alanine 73 to proline 82 shows a compositional bias: pro residues. Residues leucine 120–glutamate 135 are compositionally biased toward low complexity. The region spanning glutamate 424–asparagine 660 is the Ras-GEF domain.

Functionally, probable guanine nucleotide exchange factor (GEF). This Homo sapiens (Human) protein is Rap guanine nucleotide exchange factor-like 1 (RAPGEFL1).